The primary structure comprises 285 residues: Prephenate dehydratase (285 aa).

The region spanning 2–183 (KVGYLGPAAT…NHTRFVILSP (182 aa)) is the Prephenate dehydratase domain. The 78-residue stretch at 204-281 (MVMLPQDDQS…CKVRLLGAYQ (78 aa)) folds into the ACT domain.

It catalyses the reaction prephenate + H(+) = 3-phenylpyruvate + CO2 + H2O. Its pathway is amino-acid biosynthesis; L-phenylalanine biosynthesis; phenylpyruvate from prephenate: step 1/1. The chain is Prephenate dehydratase (pheA) from Bacillus subtilis (strain 168).